Consider the following 189-residue polypeptide: Thymidine kinase (189 aa).

ATP contacts are provided by residues 9–16 and 85–88; these read GTMNSGKS and DEAQ. Glu-86 serves as the catalytic Proton acceptor. Zn(2+)-binding residues include Cys-143, Cys-146, Cys-180, and His-183.

Belongs to the thymidine kinase family. Homotetramer.

Its subcellular location is the cytoplasm. It catalyses the reaction thymidine + ATP = dTMP + ADP + H(+). This chain is Thymidine kinase, found in Lactococcus lactis subsp. lactis (strain IL1403) (Streptococcus lactis).